The following is a 305-amino-acid chain: Aspartate carbamoyltransferase catalytic subunit (305 aa).

Residues R60 and T61 each coordinate carbamoyl phosphate. K88 lines the L-aspartate pocket. Carbamoyl phosphate-binding residues include R110, H138, and Q141. The L-aspartate site is built by R171 and R222. Residues A263 and P264 each contribute to the carbamoyl phosphate site.

Belongs to the aspartate/ornithine carbamoyltransferase superfamily. ATCase family. In terms of assembly, heterododecamer (2C3:3R2) of six catalytic PyrB chains organized as two trimers (C3), and six regulatory PyrI chains organized as three dimers (R2).

The enzyme catalyses carbamoyl phosphate + L-aspartate = N-carbamoyl-L-aspartate + phosphate + H(+). It functions in the pathway pyrimidine metabolism; UMP biosynthesis via de novo pathway; (S)-dihydroorotate from bicarbonate: step 2/3. Its function is as follows. Catalyzes the condensation of carbamoyl phosphate and aspartate to form carbamoyl aspartate and inorganic phosphate, the committed step in the de novo pyrimidine nucleotide biosynthesis pathway. In Halalkalibacterium halodurans (strain ATCC BAA-125 / DSM 18197 / FERM 7344 / JCM 9153 / C-125) (Bacillus halodurans), this protein is Aspartate carbamoyltransferase catalytic subunit.